The primary structure comprises 428 residues: GTPase Obg (428 aa).

One can recognise an Obg domain in the interval 1 to 158 (MFVDQVKVYV…RYIVLELKVL (158 aa)). The segment at 117-143 (ARGGRGGRGNSRFATPANPAPQLSENG) is disordered. Residues 159 to 329 (ADVGLVGFPS…LLFEVANQLE (171 aa)) enclose the OBG-type G domain. GTP is bound by residues 165–172 (GFPSVGKS), 190–194 (FTTLV), 212–215 (DLPG), 282–285 (NKMD), and 310–312 (SAV). Mg(2+) is bound by residues S172 and T192. Residues 350-428 (TMENEEVPFN…LLEFEFEFID (79 aa)) enclose the OCT domain.

It belongs to the TRAFAC class OBG-HflX-like GTPase superfamily. OBG GTPase family. In terms of assembly, monomer. Interacts with TasA (AC P54507) in pull-down experiments. It depends on Mg(2+) as a cofactor.

Its subcellular location is the cytoplasm. With respect to regulation, inhibited by GDP; less than 20 uM ppGpp stimulates the GTPase, while higher concentrations inhibit. Functionally, necessary for the transition from vegetative growth to stage 0 or stage II of sporulation, but sporulation subsequent to these stages is unaffected at 45 degrees Celsius. This ts effect is probably due solely to the E-79 mutation. Required for expression of early sporulation genes, further suggesting a role in the induction of sporulation. Depletion effects on sporulation can be partially suppressed by missense mutations in spo0A. Strains depleted for obg stop growing after about 3 hours and do not induce the sigma-B factor following ethanol stress. It cofractionates with the ribosome and upstream stress response regulators RsbR, RsbS and RsbT in size fractionation columns, suggesting the ribosome might serve as a possible mediator of the activity of obg and the stress induction of sigma-B. In glycerol gradients partially associates with ribosomes; this is stabilized by a nonhydrolyzable GTP-analog and to a lesser extent GTP and GDP. In terms of biological role, an essential GTPase which binds GTP, GDP and possibly (p)ppGpp with moderate affinity, with high nucleotide exchange rates and a fairly low GTP hydrolysis rate. Plays a role in control of the cell cycle, stress response, ribosome biogenesis and in those bacteria that undergo differentiation, in morphogenesis control. The polypeptide is GTPase Obg (Bacillus subtilis (strain 168)).